A 118-amino-acid chain; its full sequence is Large ribosomal subunit protein bL20 (118 aa).

The protein belongs to the bacterial ribosomal protein bL20 family.

Its function is as follows. Binds directly to 23S ribosomal RNA and is necessary for the in vitro assembly process of the 50S ribosomal subunit. It is not involved in the protein synthesizing functions of that subunit. The sequence is that of Large ribosomal subunit protein bL20 from Thermus thermophilus (strain ATCC BAA-163 / DSM 7039 / HB27).